Consider the following 84-residue polypeptide: Toxin BmKaTx16 (84 aa).

Positions 1-19 are cleaved as a signal peptide; sequence MNYLVMISFALLLMTGVES. Residues 21-83 form the LCN-type CS-alpha/beta domain; sequence RDAYIAKPHN…VPIRVPGKCH (63 aa). 4 disulfide bridges follow: Cys31–Cys82, Cys35–Cys55, Cys41–Cys65, and Cys45–Cys67. A propeptide (removed by a carboxypeptidase) is located at residue Arg84.

This sequence belongs to the long (4 C-C) scorpion toxin superfamily. Sodium channel inhibitor family. Alpha subfamily. As to expression, expressed by the venom gland.

It localises to the secreted. Functionally, alpha toxins bind voltage-independently at site-3 of sodium channels (Nav) and inhibit the inactivation of the activated channels, thereby blocking neuronal transmission. This chain is Toxin BmKaTx16, found in Olivierus martensii (Manchurian scorpion).